The sequence spans 234 residues: Ankyrin repeat-containing protein C6C3.08 (234 aa).

ANK repeat units lie at residues 36–66, 70–100, 106–135, 140–169, and 173–203; these read DKRT…KPDE, AGWT…DVDP, GGQT…ELIR, QGQT…PLNT, and YGFT…TLRK.

The polypeptide is Ankyrin repeat-containing protein C6C3.08 (Schizosaccharomyces pombe (strain 972 / ATCC 24843) (Fission yeast)).